We begin with the raw amino-acid sequence, 1250 residues long: Myosin-1 (1250 aa).

The tract at residues 1–43 (MGHSRRPAGGEKKSRGFGRSKAAADVGDGRQTGGKPQVKKATF) is disordered. One can recognise a Myosin motor domain in the interval 51 to 730 (IGVSDLTLLS…TLFALEAMRD (680 aa)). Residue 144-151 (GESGAGKT) participates in ATP binding. S372 is modified (phosphoserine). Positions 419–501 (SIGILDIYGF…PGVFAALNDA (83 aa)) are actin-binding. IQ domains lie at 734-754 (HNMA…RTEC) and 755-780 (AIRI…QGHQ). Residues 788 to 978 (RRRMSLLGSR…TIHTGPGEPA (191 aa)) form the TH1 domain. 2 disordered regions span residues 962–1079 (DDSY…PKKP) and 1126–1250 (WTPE…DDDW). The segment covering 1021–1035 (AAQPLPRATPQPAAP) has biased composition (pro residues). Residues 1036 to 1051 (QPAARAVPQPVAAVAA) show a composition bias toward low complexity. Composition is skewed to pro residues over residues 1064–1077 (APPP…PAPK) and 1139–1151 (TPKP…PPAA). Residues 1076–1137 (PKKPTAKVLY…PEAYLEEQVA (62 aa)) enclose the SH3 domain. Residues 1152–1170 (PRSTPAPATNGAAAAAKAK) show a composition bias toward low complexity. A compositionally biased stretch (polar residues) spans 1201 to 1222 (VSMNSHDSSGGSGRGTPNSMSN). Over residues 1223-1232 (ASLAGGLAEA) the composition is skewed to low complexity.

The protein belongs to the TRAFAC class myosin-kinesin ATPase superfamily. Myosin family. Post-translationally, phosphorylation of the TEDS site (Ser-372) is required for the polarization of the actin cytoskeleton. Phosphorylation probably activates the myosin-I ATPase activity.

The protein localises to the cytoplasm. The protein resides in the cytoskeleton. Its subcellular location is the actin patch. In terms of biological role, type-I myosin implicated in the organization of the actin cytoskeleton. Required for proper actin cytoskeleton polarization. At the cell cortex, assembles in patch-like structures together with proteins from the actin-polymerizing machinery and promotes actin assembly. Functions as actin nucleation-promoting factor (NPF) for the Arp2/3 complex. Plays an important role in polarized growth, spore germination, hyphal morphogenesis, and septal wall formation. In Neosartorya fischeri (strain ATCC 1020 / DSM 3700 / CBS 544.65 / FGSC A1164 / JCM 1740 / NRRL 181 / WB 181) (Aspergillus fischerianus), this protein is Myosin-1 (myoA).